A 1669-amino-acid chain; its full sequence is Collagen alpha-1(IV) chain (1669 aa).

A signal peptide spans 1 to 27 (MGPRLSVWLLLLPAALLLHEEHSRAAA). Residues 28 to 172 (KGGCAGSGCG…LGHVPGMLLK (145 aa)) constitute a propeptide, N-terminal propeptide (7S domain). Disordered stretches follow at residues 48–459 (KGER…EIGE), 504–1382 (GRDG…PKGQ), and 1404–1431 (PGQKGEMGPAGPTGPRGFPGPPGPDGLP). A glycan (N-linked (GlcNAc...) asparagine) is linked at Asn126. Positions 173 to 1440 (GERGFPGIPG…PGSMGPPGTP (1268 aa)) are triple-helical region. Residues 196–214 (VGPPGFTGPPGPPGPPGPP) show a composition bias toward pro residues. Residues Pro204, Pro207, and Pro210 each carry the 3-hydroxyproline modification. Over residues 234 to 249 (QGVSGPPGVPGQAQVQ) the composition is skewed to low complexity. 2 stretches are compositionally biased toward basic and acidic residues: residues 250–263 (EKGDFATKGEKGQK) and 289–298 (PGKDGDKGEK). Composition is skewed to pro residues over residues 367–376 (PGQPGPPGLP), 413–424 (PGPPGSPGPPGQ), and 436–448 (PGPPGDQGPPGIP). Over residues 535 to 545 (FDLRLKGDKGD) the composition is skewed to basic and acidic residues. A compositionally biased stretch (gly residues) spans 586–595 (GPPGGVGFPG). 2 positions are modified to 3-hydroxyproline: Pro587 and Pro602. Pro603 carries the 4-hydroxyproline modification. Pro605 is subject to 3-hydroxyproline. At Pro606 the chain carries 4-hydroxyproline. Over residues 611–620 (AGPIGDKGQA) the composition is skewed to low complexity. The segment covering 621–630 (GFPGGPGSPG) has biased composition (gly residues). 4-hydroxyproline occurs at positions 623, 626, 629, and 632. Pro647 is subject to 3-hydroxyproline. Over residues 797–817 (GVPGIGPPGARGPPGGQGPPG) the composition is skewed to gly residues. Low complexity-rich tracts occupy residues 856-875 (QSGLPGLPGQQGAPGIPGFP) and 977-986 (PGKDGQAGQP). Residues 1011-1020 (GSVGGMGLPG) show a composition bias toward gly residues. Residues 1086–1114 (SIGIPGMPGSPGLKGSPGSVGYPGSPGLP) are compositionally biased toward low complexity. The residue at position 1214 (Pro1214) is a 3-hydroxyproline. Pro residues predominate over residues 1247–1258 (PGLPGPMGPPGL). Residues 1290–1299 (GMPGIGGSPG) show a composition bias toward gly residues. A compositionally biased stretch (low complexity) spans 1368–1382 (PGLKGLQGLPGPKGQ). Position 1424 is a 3-hydroxyproline (Pro1424). One can recognise a Collagen IV NC1 domain in the interval 1445-1669 (GFLVTRHSQT…SRCQVCMRRT (225 aa)). Disulfide bonds link Cys1460/Cys1551, Cys1493/Cys1548, Cys1505/Cys1511, Cys1570/Cys1665, Cys1604/Cys1662, and Cys1616/Cys1622. Met1533 participates in a covalent cross-link: S-Lysyl-methionine sulfilimine (Met-Lys) (interchain with K-1651). Residue Lys1651 forms an S-Lysyl-methionine sulfilimine (Lys-Met) (interchain with M-1533) linkage.

Belongs to the type IV collagen family. There are six type IV collagen isoforms, alpha 1(IV)-alpha 6(IV), each of which can form a triple helix structure with 2 other chains to generate type IV collagen network. Interacts with EFEMP2. In terms of processing, lysines at the third position of the tripeptide repeating unit (G-X-Y) are hydroxylated. The modified lysines can be O-glycosylated. Post-translationally, contains 4-hydroxyproline. Prolines at the third position of the tripeptide repeating unit (G-X-Y) are hydroxylated in some or all of the chains. Contains 3-hydroxyproline. This modification occurs on the first proline residue in the sequence motif Gly-Pro-Hyp, where Hyp is 4-hydroxyproline. In terms of processing, type IV collagens contain numerous cysteine residues which are involved in inter- and intramolecular disulfide bonding. 12 of these, located in the NC1 domain, are conserved in all known type IV collagens. Post-translationally, the trimeric structure of the NC1 domains is stabilized by covalent bonds (sulfilimine cross-links) between Lys and Met residues. These cross-links are important for the mechanical stability of the basement membrane. Sulfilimine cross-link is catalyzed by PXDN. Proteolytic processing produces the C-terminal NC1 peptide, arresten. Highly expressed in placenta.

The protein resides in the secreted. Its subcellular location is the extracellular space. It localises to the extracellular matrix. The protein localises to the basement membrane. Functionally, type IV collagen is the major structural component of glomerular basement membranes (GBM), forming a 'chicken-wire' meshwork together with laminins, proteoglycans and entactin/nidogen. Arresten, comprising the C-terminal NC1 domain, inhibits angiogenesis and tumor formation. The C-terminal half is found to possess the anti-angiogenic activity. Specifically inhibits endothelial cell proliferation, migration and tube formation. This is Collagen alpha-1(IV) chain from Homo sapiens (Human).